The following is a 275-amino-acid chain: Trypsin-3 (275 aa).

A signal peptide spans 1–22 (MISNKIAILLAVLVVAVACAQA). A propeptide spans 23-48 (RVALKHRSVQALPRFLPRPKYDVGHR) (activation peptide). Residues 49–274 (IVGGFEIDVS…VRDWVRENSG (226 aa)) enclose the Peptidase S1 domain. A disulfide bridge connects residues C74 and C90. Active-site charge relay system residues include H89 and D134. Cystine bridges form between C199-C215 and C226-C250. Catalysis depends on S230, which acts as the Charge relay system.

This sequence belongs to the peptidase S1 family. As to expression, expressed in the midgut. Expression levels drop a few hours after blood feeding and pick up again 28 hours later.

Its subcellular location is the secreted. The catalysed reaction is Preferential cleavage: Arg-|-Xaa, Lys-|-Xaa.. Functionally, constitutive trypsin that is expressed 2 days after emergence, coinciding with host seeking behavior of the female. The chain is Trypsin-3 (TRYP3) from Anopheles gambiae (African malaria mosquito).